We begin with the raw amino-acid sequence, 637 residues long: Chaperone protein HtpG (637 aa).

An a; substrate-binding region spans residues 1–328 (MADIEELKFD…SSDLPLNISR (328 aa)). The b stretch occupies residues 329–556 (ETLQNNRIVE…DNSMDIRMER (228 aa)). The tract at residues 488-508 (IGASDDSGDKTSEDSGESASD) is disordered. Basic and acidic residues predominate over residues 494–508 (SGDKTSEDSGESASD). Residues 557 to 637 (FLREQKQLNY…GVLAKIFSSK (81 aa)) are c.

It belongs to the heat shock protein 90 family. In terms of assembly, homodimer.

It is found in the cytoplasm. Its function is as follows. Molecular chaperone. Has ATPase activity. This chain is Chaperone protein HtpG, found in Anaplasma phagocytophilum (strain HZ).